A 1252-amino-acid polypeptide reads, in one-letter code: Calmodulin-regulated spectrin-associated protein 3 (1252 aa).

Disordered regions lie at residues 183–205, 331–385, 429–457, 479–604, 638–697, 712–935, 962–981, 996–1030, and 1063–1114; these read KTEQ…SPAQ, HAVS…SMSH, SVSS…ESGD, GAAD…MSEL, FLQV…LGDY, QRDM…EAAR, TTRA…GDFT, DLDK…DDSA, and PNNL…TGPR. Thr184 carries the post-translational modification Phosphothreonine. Residue Ser193 is modified to Phosphoserine. In terms of domain architecture, Calponin-homology (CH) spans 203–312; the sequence is PAQPSIRYRK…LVVLLAEMYM (110 aa). Ser334, Ser347, Ser351, Ser368, Ser373, and Ser382 each carry phosphoserine. Over residues 335–353 the composition is skewed to polar residues; it reads PRNTETVPSQNNSGSSSPV. Positions 359–373 are enriched in low complexity; that stretch reads PLLSPGGPQSPLRGS. Polar residues-rich tracts occupy residues 374 to 383, 441 to 450, and 525 to 534; these read TGSLKSSPSM, VSTSSRNSAQ, and ENPSKSSPCS. Residues Ser548, Ser555, and Ser561 each carry the phosphoserine modification. Positions 569 to 580 are enriched in basic and acidic residues; that stretch reads AERKKQLVKAEA. A coiled-coil region spans residues 595 to 629; it reads EALSSEMSELGARLEEKRRAIEAQKRRIEAIFAKH. The residue at position 683 (Ser683) is a Phosphoserine. Positions 696 to 727 form a coiled coil; sequence DYNRAVSKLSAALSSLQRDMQRLTDQQQRLLA. The span at 729–739 shows a compositional bias: pro residues; sequence PEAPGPAPPPA. Over residues 740 to 768 the composition is skewed to low complexity; sequence AWVIPGPATGPKAASPSPARRAPAARRSP. The residue at position 767 (Ser767) is a Phosphoserine. Position 797 is a phosphothreonine (Thr797). Ser812 and Ser881 each carry phosphoserine. A compositionally biased stretch (polar residues) spans 812-825; sequence SPSQVPVQTRSSIL. Over residues 887–934 the composition is skewed to basic and acidic residues; sequence YKDEDKPEDEMAQKRASLLERQQRRVEEARRRKQWQEAEKEQKREEAA. A coiled-coil region spans residues 896–943; it reads EMAQKRASLLERQQRRVEEARRRKQWQEAEKEQKREEAARLAQEAPGL. Ser1077 is modified (phosphoserine). A CKK domain is found at 1112 to 1246; that stretch reads GPRLYKEPSA…QSKKPTTPKK (135 aa).

It belongs to the CAMSAP1 family. As to quaternary structure, interacts with PLEKHA7. Interacts with CAMSAP2. Interacts with KATNA1 and KATNB1; leading to regulate the length of CAMSAP3-decorated microtubule stretches. Interacts with AKAP9; regulating Golgi assembly in epithelial cells. Interacts with MACF1. Interacts with isoform C of CDH23; leading to inhibit CAMSAP3 ability to induce microtubule bundle formation. Interacts with AKNA. As to expression, expressed at the apical surface of respiratory epithelia, as well as in the acini of submucosal glands (at protein level). In cochlea, restricted to the organ of Corti and increases during development (at protein level). Highly expressed in both sensory hair cells and supporting cells.

It localises to the cytoplasm. Its subcellular location is the cytoskeleton. The protein localises to the cell junction. The protein resides in the adherens junction. It is found in the cilium axoneme. It localises to the cilium basal body. Functionally, key microtubule-organizing protein that specifically binds the minus-end of non-centrosomal microtubules and regulates their dynamics and organization. Specifically recognizes growing microtubule minus-ends and autonomously decorates and stabilizes microtubule lattice formed by microtubule minus-end polymerization. Acts on free microtubule minus-ends that are not capped by microtubule-nucleating proteins or other factors and protects microtubule minus-ends from depolymerization. In addition, it also reduces the velocity of microtubule polymerization. Required for the biogenesis and the maintenance of zonula adherens by anchoring the minus-end of microtubules to zonula adherens and by recruiting the kinesin KIFC3 to those junctional sites. Required for orienting the apical-to-basal polarity of microtubules in epithelial cells: acts by tethering non-centrosomal microtubules to the apical cortex, leading to their longitudinal orientation. Plays a key role in early embryos, which lack centrosomes: accumulates at the microtubule bridges that connect pairs of cells and enables the formation of a non-centrosomal microtubule-organizing center that directs intracellular transport in the early embryo. Couples non-centrosomal microtubules with actin: interaction with MACF1 at the minus ends of non-centrosomal microtubules, tethers the microtubules to actin filaments, regulating focal adhesion size and cell migration. Plays a key role in the generation of non-centrosomal microtubules by accumulating in the pericentrosomal region and cooperating with KATNA1 to release non-centrosomal microtubules from the centrosome. Through the microtubule cytoskeleton, also regulates the organization of cellular organelles including the Golgi and the early endosomes. Through interaction with AKAP9, involved in translocation of Golgi vesicles in epithelial cells, where microtubules are mainly non-centrosomal. Plays an important role in motile cilia function by facilitatating proper orientation of basal bodies and formation of central microtubule pairs in motile cilia. The sequence is that of Calmodulin-regulated spectrin-associated protein 3 from Mus musculus (Mouse).